Reading from the N-terminus, the 591-residue chain is Probable Xaa-Pro aminopeptidase PEPP (591 aa).

The tract at residues 31 to 59 (SIHSPPPSVSAATHGGVKNPSFSQRRTSG) is disordered. The Mn(2+) site is built by Asp-322 and Asp-333. Positions 441–450 (GLSRQAISGS) are enriched in low complexity. Positions 441–460 (GLSRQAISGSRRLPPPRNMK) are disordered. 2 residues coordinate Mn(2+): Glu-511 and Glu-552.

The protein belongs to the peptidase M24B family. The cofactor is Mn(2+).

It catalyses the reaction Release of any N-terminal amino acid, including proline, that is linked to proline, even from a dipeptide or tripeptide.. Its function is as follows. Catalyzes the removal of a penultimate prolyl residue from the N-termini of peptides. The protein is Probable Xaa-Pro aminopeptidase PEPP (PEPP) of Sordaria macrospora (strain ATCC MYA-333 / DSM 997 / K(L3346) / K-hell).